Here is a 318-residue protein sequence, read N- to C-terminus: Transaldolase (318 aa).

Catalysis depends on Lys132, which acts as the Schiff-base intermediate with substrate.

It belongs to the transaldolase family. Type 1 subfamily. As to quaternary structure, homodimer.

It is found in the cytoplasm. It carries out the reaction D-sedoheptulose 7-phosphate + D-glyceraldehyde 3-phosphate = D-erythrose 4-phosphate + beta-D-fructose 6-phosphate. Its pathway is carbohydrate degradation; pentose phosphate pathway; D-glyceraldehyde 3-phosphate and beta-D-fructose 6-phosphate from D-ribose 5-phosphate and D-xylulose 5-phosphate (non-oxidative stage): step 2/3. Functionally, transaldolase is important for the balance of metabolites in the pentose-phosphate pathway. The protein is Transaldolase of Shewanella loihica (strain ATCC BAA-1088 / PV-4).